The sequence spans 343 residues: Mas-related G-protein coupled receptor member F (343 aa).

Residues 1–44 lie on the Extracellular side of the membrane; that stretch reads MAGNCSWEAHPGNRNKMCPGLSEAPELYSRGFLTIEQIAMLPPP. Asparagine 4 is a glycosylation site (N-linked (GlcNAc...) asparagine). A helical transmembrane segment spans residues 45–66; that stretch reads AVMNYIFLLLCLCGLVGNGLVL. Topologically, residues 67-82 are cytoplasmic; sequence WFFGFSIKRNPFSIYF. A helical membrane pass occupies residues 83–104; the sequence is LHLASADVGYLFSKAVFSILNT. The Extracellular segment spans residues 105–123; sequence GGFLGTFADYIRSVCRVLG. A helical membrane pass occupies residues 124-144; sequence LCMFLTGVSLLPAVSAERCAS. Residues 145 to 160 lie on the Cytoplasmic side of the membrane; that stretch reads VIFPAWYWRRRPKRLS. A helical membrane pass occupies residues 161–181; sequence AVVCALLWVLSLLVTCLHNYF. At 182-198 the chain is on the extracellular side; it reads CVFLGRGAPGAACRHMD. A helical membrane pass occupies residues 199–220; that stretch reads IFLGILLFLLCCPLMVLPCLAL. Residues 221-241 are Cytoplasmic-facing; it reads ILHVECRARRRQRSAKLNHVI. A helical transmembrane segment spans residues 242–263; sequence LAMVSVFLVSSIYLGIDWFLFW. The Extracellular portion of the chain corresponds to 264-273; it reads VFQIPAPFPE. Residues 274-294 traverse the membrane as a helical segment; sequence YVTDLCICINSSAKPIVYFLA. Residues 295-343 are Cytoplasmic-facing; sequence GRDKSQRLWEPLRVVFQRALRDGAELGEAGGSTPNTVTMEMQCPPGNAS. The disordered stretch occupies residues 320–343; it reads LGEAGGSTPNTVTMEMQCPPGNAS.

It belongs to the G-protein coupled receptor 1 family. Mas subfamily.

Its subcellular location is the cell membrane. Its function is as follows. Orphan receptor. May bind to a neuropeptide and may regulate nociceptor function and/or development, including the sensation or modulation of pain. The sequence is that of Mas-related G-protein coupled receptor member F (MRGPRF) from Homo sapiens (Human).